The sequence spans 75 residues: Putative membrane protein insertion efficiency factor 2 (75 aa).

This sequence belongs to the UPF0161 family.

The protein localises to the cell membrane. In terms of biological role, could be involved in insertion of integral membrane proteins into the membrane. This Bacillus licheniformis (strain ATCC 14580 / DSM 13 / JCM 2505 / CCUG 7422 / NBRC 12200 / NCIMB 9375 / NCTC 10341 / NRRL NRS-1264 / Gibson 46) protein is Putative membrane protein insertion efficiency factor 2.